A 1050-amino-acid chain; its full sequence is Zinc finger and BTB domain-containing protein 11 (1050 aa).

Acidic residues predominate over residues 143-156 (LDSGEESNESEDDL). Residues 143 to 173 (LDSGEESNESEDDLSNFTSPPSTASKSSKKK) form a disordered region. The segment covering 157-168 (SNFTSPPSTASK) has biased composition (low complexity). Positions 214–282 (CDVTLLIEGE…AYTSVLSFDF (69 aa)) constitute a BTB domain. Disordered stretches follow at residues 373 to 514 (AEQN…EGGY) and 543 to 563 (LVQR…STEE). A compositionally biased stretch (low complexity) spans 378 to 399 (EPEQQPAPQASPEAEASVSPVE). Composition is skewed to basic and acidic residues over residues 478 to 501 (SKDE…DTYR) and 553 to 563 (PKRDAKESTEE). C2H2-type zinc fingers lie at residues 566–588 (HKCG…TLKH) and 594–616 (YKCP…LIRH). The interval 617–641 (TRKEAPTSSSSNSTSTEASGGSSEK) is disordered. Low complexity predominate over residues 623–638 (TSSSSNSTSTEASGGS). 10 consecutive C2H2-type zinc fingers follow at residues 648–670 (FICS…MLKH), 676–698 (HACQ…QSLH), 704–726 (FQCE…MSIH), 732–754 (YFCS…LKKH), 763–785 (YHCT…MNKH), 791–813 (FQCQ…VKSH), 819–843 (YRCN…KATH), 855–877 (RVCD…MNNH), 883–905 (FECL…VRTH), and 911–934 (YVCP…TKFH).

Its subcellular location is the nucleus. It localises to the nucleolus. In terms of biological role, may be involved in transcriptional regulation. This chain is Zinc finger and BTB domain-containing protein 11, found in Mus musculus (Mouse).